A 214-amino-acid chain; its full sequence is uncharacterized protein (214 aa).

Transmembrane regions (helical) follow at residues 19-39 (IAIFALAFISFILILIISYIL) and 50-70 (LALFLMDNLYSILLKIFLLIG).

It localises to the cell membrane. This is an uncharacterized protein from Methanocaldococcus jannaschii (strain ATCC 43067 / DSM 2661 / JAL-1 / JCM 10045 / NBRC 100440) (Methanococcus jannaschii).